The primary structure comprises 199 residues: CASP-like protein 1D2 (199 aa).

Positions 1-27 (MASTENPDPETGKSEPIPASATPPPSS) are disordered. At Ala-2 the chain carries N-acetylalanine. Topologically, residues 2–36 (ASTENPDPETGKSEPIPASATPPPSSAASFLDCRK) are cytoplasmic. A helical transmembrane segment spans residues 37–57 (IDIITRVLLFSATLTALIVMV). Topologically, residues 58–85 (TSDQTEMTQLPGVSSPAPVSAEFNDSPA) are extracellular. The helical transmembrane segment at 86–106 (FIYFVVALVVASFYALISTLV) threads the bilayer. The Cytoplasmic segment spans residues 107 to 129 (SISLLLKPEFTAQFSIYLASLDM). Residues 130 to 150 (VMLGILASATGTAGGVAYIAL) traverse the membrane as a helical segment. Over 151–171 (KGNEEVGWNKICNVYDKFCRY) the chain is Extracellular. A helical transmembrane segment spans residues 172-192 (IATSLALSLFASLLLLVLSIW). Over 193–199 (SALSKRT) the chain is Cytoplasmic.

Belongs to the Casparian strip membrane proteins (CASP) family. Homodimer and heterodimers. In terms of tissue distribution, expressed in the root endodermis and flowers.

The protein resides in the cell membrane. The chain is CASP-like protein 1D2 from Arabidopsis thaliana (Mouse-ear cress).